The primary structure comprises 238 residues: Inactive glycoside hydrolase XLP1 (238 aa).

A signal peptide spans 1–19 (MKSFLIAIVIAVLLPVSAA). The active site involves Glu-133. Residues Asn-171 and Asn-187 are each glycosylated (N-linked (GlcNAc...) asparagine). The active site involves Glu-219.

It belongs to the glycosyl hydrolase 12 (cellulase H) family. As to quaternary structure, interacts with host apoplastic glucanase inhibitor GIP2.

The protein localises to the secreted. Its function is as follows. Non-functional secreted XEG1-like protein that binds to host Nicotiana benthamiana apoplastic glucanase inhibitor protein GIP2 more tightly than does XEG1, thus it outcompetes XEG1 for GIP2 binding and frees functional XEG1 to support P.parasitica infection. With XEG1, is required to elevate apoplastic sugar during P.parasitica infection. This is Inactive glycoside hydrolase XLP1 from Phytophthora nicotianae (strain INRA-310) (Phytophthora parasitica).